Consider the following 96-residue polypeptide: Large ribosomal subunit protein bL28 (96 aa).

Residues 1–22 are compositionally biased toward polar residues; the sequence is MSRSCELTGKGVQSGNNVSHAN. The disordered stretch occupies residues 1–24; the sequence is MSRSCELTGKGVQSGNNVSHANNK.

It belongs to the bacterial ribosomal protein bL28 family.

In Rhizobium meliloti (strain 1021) (Ensifer meliloti), this protein is Large ribosomal subunit protein bL28.